Here is a 149-residue protein sequence, read N- to C-terminus: FAD synthase (149 aa).

ATP contacts are provided by residues 9-10, 14-17, Asp93, and Tyr120; these read VF and HPGH.

This sequence belongs to the archaeal FAD synthase family. As to quaternary structure, homodimer. It depends on a divalent metal cation as a cofactor.

It carries out the reaction FMN + ATP + H(+) = FAD + diphosphate. It functions in the pathway cofactor biosynthesis; FAD biosynthesis; FAD from FMN: step 1/1. Catalyzes the transfer of the AMP portion of ATP to flavin mononucleotide (FMN) to produce flavin adenine dinucleotide (FAD) coenzyme. This chain is FAD synthase, found in Aciduliprofundum boonei (strain DSM 19572 / T469).